A 445-amino-acid polypeptide reads, in one-letter code: Phosphoglucosamine mutase (445 aa).

The Phosphoserine intermediate role is filled by S102. S102, D240, D242, and D244 together coordinate Mg(2+). Residue S102 is modified to Phosphoserine.

This sequence belongs to the phosphohexose mutase family. Mg(2+) is required as a cofactor. In terms of processing, activated by phosphorylation.

It carries out the reaction alpha-D-glucosamine 1-phosphate = D-glucosamine 6-phosphate. Functionally, catalyzes the conversion of glucosamine-6-phosphate to glucosamine-1-phosphate. The polypeptide is Phosphoglucosamine mutase (Mycolicibacterium vanbaalenii (strain DSM 7251 / JCM 13017 / BCRC 16820 / KCTC 9966 / NRRL B-24157 / PYR-1) (Mycobacterium vanbaalenii)).